The primary structure comprises 307 residues: Glycine--tRNA ligase alpha subunit (307 aa).

It belongs to the class-II aminoacyl-tRNA synthetase family. As to quaternary structure, tetramer of two alpha and two beta subunits.

The protein localises to the cytoplasm. The enzyme catalyses tRNA(Gly) + glycine + ATP = glycyl-tRNA(Gly) + AMP + diphosphate. In Aeromonas hydrophila subsp. hydrophila (strain ATCC 7966 / DSM 30187 / BCRC 13018 / CCUG 14551 / JCM 1027 / KCTC 2358 / NCIMB 9240 / NCTC 8049), this protein is Glycine--tRNA ligase alpha subunit.